The primary structure comprises 336 residues: Dihydroorotate dehydrogenase (quinone) (336 aa).

FMN contacts are provided by residues 62 to 66 (AGLDK) and Thr86. Lys66 contacts substrate. A substrate-binding site is contributed by 111–115 (NRMGF). FMN is bound by residues Asn139 and Asn172. Substrate is bound at residue Asn172. Residue Ser175 is the Nucleophile of the active site. Asn177 is a binding site for substrate. The FMN site is built by Lys217 and Thr245. 246–247 (NT) contacts substrate. FMN is bound by residues Gly268, Gly297, and 318 to 319 (YS).

Belongs to the dihydroorotate dehydrogenase family. Type 2 subfamily. In terms of assembly, monomer. FMN is required as a cofactor.

It localises to the cell membrane. The enzyme catalyses (S)-dihydroorotate + a quinone = orotate + a quinol. The protein operates within pyrimidine metabolism; UMP biosynthesis via de novo pathway; orotate from (S)-dihydroorotate (quinone route): step 1/1. Functionally, catalyzes the conversion of dihydroorotate to orotate with quinone as electron acceptor. In Vibrio vulnificus (strain YJ016), this protein is Dihydroorotate dehydrogenase (quinone).